Here is a 151-residue protein sequence, read N- to C-terminus: UPF0178 protein Shal_3046 (151 aa).

Belongs to the UPF0178 family.

The sequence is that of UPF0178 protein Shal_3046 from Shewanella halifaxensis (strain HAW-EB4).